The chain runs to 657 residues: UvrABC system protein B (657 aa).

The region spanning 24–409 (AGVRNQVKSQ…SGHIVQQIIR (386 aa)) is the Helicase ATP-binding domain. ATP is bound at residue 37–44 (GTTGSGKT). Residues 90–113 (YYDYYQPEAYIARSDTYIEKSLLI) carry the Beta-hairpin motif. In terms of domain architecture, Helicase C-terminal spans 426–589 (QVDDLLEEIR…IVPKPIIKAI (164 aa)). The UVR domain occupies 617–652 (EEQIKKYEALMQRAAKEFRFNEAAKYRDAMQACKEQ).

This sequence belongs to the UvrB family. As to quaternary structure, forms a heterotetramer with UvrA during the search for lesions. Interacts with UvrC in an incision complex.

Its subcellular location is the cytoplasm. Its function is as follows. The UvrABC repair system catalyzes the recognition and processing of DNA lesions. A damage recognition complex composed of 2 UvrA and 2 UvrB subunits scans DNA for abnormalities. Upon binding of the UvrA(2)B(2) complex to a putative damaged site, the DNA wraps around one UvrB monomer. DNA wrap is dependent on ATP binding by UvrB and probably causes local melting of the DNA helix, facilitating insertion of UvrB beta-hairpin between the DNA strands. Then UvrB probes one DNA strand for the presence of a lesion. If a lesion is found the UvrA subunits dissociate and the UvrB-DNA preincision complex is formed. This complex is subsequently bound by UvrC and the second UvrB is released. If no lesion is found, the DNA wraps around the other UvrB subunit that will check the other stand for damage. This chain is UvrABC system protein B, found in Chlamydia pneumoniae (Chlamydophila pneumoniae).